We begin with the raw amino-acid sequence, 704 residues long: MTRKTPIERYRNIGISAHIDAGKTTTTERILFYTGVNYKLGEVHEGTATMDWMEQEQERGITITSAATTAFWKGMAGNYPEHRINIIDTPGHVDFTIEVERSMRVLDGAVMVYDSVGGVQPQSETVWRQANKYKVPRIAFVNKMDRVGADFFRVQRQIGERMKGVAVPVQIPIGAEDHFQGVVDLVKMKAIVWDDISQGLHFEYRDIPDELLATARTWRDKMIEAAAEASEPLLEKYLAGEALSEDEIRQGIRQRTVANEIVPMLCGSAFKNKGVQALLDAIIDYLPSPVDVPAILGHTEDDKTAERHPGDNEPFSALAFKVMTDPFVGQLIFFRVYSGVVKTGDTVYIPGKTRKERLGRLLQMHANVRQEIKEVHAGDIAAAVGLKDVTTGDTLCDPDKVIMLERMVFPEPVISQAVEPKTQADQEKMGVALHRLAQEDPSFRVQTDEESGQTIISGMGELHLEILVDRMKREFGVDATVGKPQVAYRETIKQAVKDVEGKFIKQSGGRGQYGHAVLNVEPQPPGKGYEFVDAIKGGVVPREYIPAVDKGIQDALTAGVLASYPVVDVKATLVFGSSHDVDSNENAFRMAGAIAFREALRRARPILLEPMMAVEVEMPEDFMGHVMGDLSTRRGMIQGMEDIAGGGGKLVRAEVPLSEMFGYSTTLRSLTQGRATYTMEFKHYTEAPADVSEAIIRGKGMGRQ.

The region spanning 8–290 is the tr-type G domain; that stretch reads ERYRNIGISA…AIIDYLPSPV (283 aa). Residues 17–24, 88–92, and 142–145 contribute to the GTP site; these read AHIDAGKT, DTPGH, and NKMD.

The protein belongs to the TRAFAC class translation factor GTPase superfamily. Classic translation factor GTPase family. EF-G/EF-2 subfamily.

It is found in the cytoplasm. Functionally, catalyzes the GTP-dependent ribosomal translocation step during translation elongation. During this step, the ribosome changes from the pre-translocational (PRE) to the post-translocational (POST) state as the newly formed A-site-bound peptidyl-tRNA and P-site-bound deacylated tRNA move to the P and E sites, respectively. Catalyzes the coordinated movement of the two tRNA molecules, the mRNA and conformational changes in the ribosome. This is Elongation factor G 2 from Polaromonas sp. (strain JS666 / ATCC BAA-500).